Consider the following 223-residue polypeptide: Urease accessory protein UreF (223 aa).

It belongs to the UreF family. UreD, UreF and UreG form a complex that acts as a GTP-hydrolysis-dependent molecular chaperone, activating the urease apoprotein by helping to assemble the nickel containing metallocenter of UreC. The UreE protein probably delivers the nickel.

Its subcellular location is the cytoplasm. Functionally, required for maturation of urease via the functional incorporation of the urease nickel metallocenter. This chain is Urease accessory protein UreF, found in Rhizobium meliloti (strain 1021) (Ensifer meliloti).